The following is a 343-amino-acid chain: Holliday junction branch migration complex subunit RuvB (343 aa).

The large ATPase domain (RuvB-L) stretch occupies residues 1–181 (MDRIIDSAAT…FGIVQRLEFY (181 aa)). Residues Ile-20, Arg-21, Gly-62, Lys-65, Thr-66, Thr-67, 128–130 (EDF), Arg-171, Tyr-181, and Arg-218 each bind ATP. Thr-66 contacts Mg(2+). Residues 182-252 (SPEDLARIVR…VAQAAMQMLK (71 aa)) form a small ATPAse domain (RuvB-S) region. The interval 255–343 (QGGFDELDRR…SAFTDPEDLF (89 aa)) is head domain (RuvB-H). Arg-291, Arg-310, and Arg-315 together coordinate DNA.

It belongs to the RuvB family. Homohexamer. Forms an RuvA(8)-RuvB(12)-Holliday junction (HJ) complex. HJ DNA is sandwiched between 2 RuvA tetramers; dsDNA enters through RuvA and exits via RuvB. An RuvB hexamer assembles on each DNA strand where it exits the tetramer. Each RuvB hexamer is contacted by two RuvA subunits (via domain III) on 2 adjacent RuvB subunits; this complex drives branch migration. In the full resolvosome a probable DNA-RuvA(4)-RuvB(12)-RuvC(2) complex forms which resolves the HJ.

The protein localises to the cytoplasm. It carries out the reaction ATP + H2O = ADP + phosphate + H(+). Its function is as follows. The RuvA-RuvB-RuvC complex processes Holliday junction (HJ) DNA during genetic recombination and DNA repair, while the RuvA-RuvB complex plays an important role in the rescue of blocked DNA replication forks via replication fork reversal (RFR). RuvA specifically binds to HJ cruciform DNA, conferring on it an open structure. The RuvB hexamer acts as an ATP-dependent pump, pulling dsDNA into and through the RuvAB complex. RuvB forms 2 homohexamers on either side of HJ DNA bound by 1 or 2 RuvA tetramers; 4 subunits per hexamer contact DNA at a time. Coordinated motions by a converter formed by DNA-disengaged RuvB subunits stimulates ATP hydrolysis and nucleotide exchange. Immobilization of the converter enables RuvB to convert the ATP-contained energy into a lever motion, pulling 2 nucleotides of DNA out of the RuvA tetramer per ATP hydrolyzed, thus driving DNA branch migration. The RuvB motors rotate together with the DNA substrate, which together with the progressing nucleotide cycle form the mechanistic basis for DNA recombination by continuous HJ branch migration. Branch migration allows RuvC to scan DNA until it finds its consensus sequence, where it cleaves and resolves cruciform DNA. The protein is Holliday junction branch migration complex subunit RuvB of Xylella fastidiosa (strain Temecula1 / ATCC 700964).